The sequence spans 231 residues: 7-cyano-7-deazaguanine synthase (231 aa).

An ATP-binding site is contributed by 8 to 18 (FSGGQDSTTCL). Residues Cys-188, Cys-197, Cys-200, and Cys-203 each contribute to the Zn(2+) site.

Belongs to the QueC family. The cofactor is Zn(2+).

It carries out the reaction 7-carboxy-7-deazaguanine + NH4(+) + ATP = 7-cyano-7-deazaguanine + ADP + phosphate + H2O + H(+). Its pathway is purine metabolism; 7-cyano-7-deazaguanine biosynthesis. In terms of biological role, catalyzes the ATP-dependent conversion of 7-carboxy-7-deazaguanine (CDG) to 7-cyano-7-deazaguanine (preQ(0)). The chain is 7-cyano-7-deazaguanine synthase from Salmonella gallinarum (strain 287/91 / NCTC 13346).